The sequence spans 101 residues: Apolipoprotein C-II (101 aa).

The first 22 residues, 1-22 (MGTRCLLVLLLVLLVLRCDVQG), serve as a signal peptide directing secretion. Residues 23 to 28 (DDMARQ) constitute a propeptide, removed in mature form. The segment at 66 to 74 (AVDEKIRDM) is lipid binding. The tract at residues 78–101 (STAAVRIYTGILTDQILSMLSGDS) is lipoprotein lipase cofactor.

Belongs to the apolipoprotein C2 family. In terms of processing, proapolipoprotein C-II is synthesized as a sialic acid containing glycoprotein which is subsequently desialylated prior to its proteolytic processing. Post-translationally, proapolipoprotein C-II, the major form found in plasma undergoes proteolytic cleavage of its N-terminal hexapeptide to generate the mature form apolipoprotein C-II, which occurs as the minor form in plasma.

The protein resides in the secreted. Its function is as follows. Component of chylomicrons, very low-density lipoproteins (VLDL), low-density lipoproteins (LDL), and high-density lipoproteins (HDL) in plasma. Plays an important role in lipoprotein metabolism as an activator of lipoprotein lipase, the enzyme which hydrolyzes the triacylglycerols on chylomicrons and VLDL. The chain is Apolipoprotein C-II (APOC2) from Acinonyx jubatus (Cheetah).